An 82-amino-acid chain; its full sequence is Splicing factor U2AF 35 kDa subunit (82 aa).

At Ala2 the chain carries N-acetylalanine. Residues 12-40 (EKDKVNCSFYFKIGACRHGDRCSRLHNKP) form a C3H1-type zinc finger. Residue Lys39 is modified to N6-methyllysine. Positions 65–82 (SHCHVSDVEVQEHYDNFF) constitute an RRM domain.

This sequence belongs to the splicing factor SR family. In terms of assembly, identified in the spliceosome C complex. Heterodimer with U2AF2. Interacts (via RS domain) with PHF5A (via N-terminus). Interacts with ZRANB2. Interacts with SDE2. Interacts with SF3B1.

It is found in the nucleus. The protein resides in the nucleus speckle. Its function is as follows. Plays a critical role in both constitutive and enhancer-dependent splicing by mediating protein-protein interactions and protein-RNA interactions required for accurate 3'-splice site selection. Recruits U2 snRNP to the branch point. Directly mediates interactions between U2AF2 and proteins bound to the enhancers and thus may function as a bridge between U2AF2 and the enhancer complex to recruit it to the adjacent intron. The chain is Splicing factor U2AF 35 kDa subunit (U2AF1) from Sus scrofa (Pig).